A 277-amino-acid polypeptide reads, in one-letter code: Putative hydro-lyase BPP3031 (277 aa).

It belongs to the D-glutamate cyclase family.

This chain is Putative hydro-lyase BPP3031, found in Bordetella parapertussis (strain 12822 / ATCC BAA-587 / NCTC 13253).